The primary structure comprises 828 residues: Calpain-A (828 aa).

Positions 1-14 (MDDLRGFLRQAGQE) constitute an EF-hand 1 domain. The region spanning 88–387 (LFEDPLFPAS…FDRVEICNLS (300 aa)) is the Calpain catalytic domain. Active-site residues include Cys-143, His-299, and Asn-327. Residues 388–557 (PDSLTEDQQN…TQNNMEENDD (170 aa)) are domain III. The segment at 558 to 577 (HVGYGGKADTITPGFPTPKP) is linker. The interval 578-828 (IDPQKEGLRR…EEWIERTIYS (251 aa)) is domain IV. EF-hand domains follow at residues 579–614 (DPQK…SMRD), 699–734 (FSKD…IAKW), 729–764 (SEIA…AGYH), and 764–799 (HLNN…IKTY). Ca(2+) is bound by residues Asp-712, Asp-714, Ser-716, Lys-718, Glu-723, Asp-742, Thr-746, Arg-748, and Gln-753.

It belongs to the peptidase C2 family. Post-translationally, undergoes calcium-dependent autolytic cleavage between Lys-54 and Asn-55, which is necessary for activation of the protein. Localized to the anterior and posterior embryonic poles just after fertilization. Becomes distributed around the polar buds and just below the pole cells of the posterior pole during cleavage cycles. During these nuclear divisions anterior localization disappears. Localized to actin caps that underlie the plasma membrane, immediately above each nucleus at cleavage cycles 8 and 9. Localized to a small set of nerve, midgut and blood cells in adults.

It localises to the cytoplasm. Activated by millimolar concentrations of calcium, and by phosphatidylinositol 4,5-diphosphate, phosphatidylinositol 4-monophosphate, phosphatidylinositol and phosphatidic acid. Its function is as follows. Calcium-regulated non-lysosomal thiol-protease. Involved in the organization of the actin-related cytoskeleton during embryogenesis. The chain is Calpain-A (CalpA) from Drosophila melanogaster (Fruit fly).